Consider the following 94-residue polypeptide: Putative pterin-4-alpha-carbinolamine dehydratase (94 aa).

It belongs to the pterin-4-alpha-carbinolamine dehydratase family.

It carries out the reaction (4aS,6R)-4a-hydroxy-L-erythro-5,6,7,8-tetrahydrobiopterin = (6R)-L-erythro-6,7-dihydrobiopterin + H2O. This Koribacter versatilis (strain Ellin345) protein is Putative pterin-4-alpha-carbinolamine dehydratase.